A 162-amino-acid polypeptide reads, in one-letter code: Dihydrofolate reductase (162 aa).

The DHFR domain maps to 3-161; that stretch reads KITLIAACAE…TSYAFVHYLR (159 aa). 7-9 is a substrate binding site; it reads IAA. Residues 8-9 and 16-21 each bind NADP(+); these read AA and IGAGNA. Position 29 (Asp-29) interacts with substrate. 45–48 is an NADP(+) binding site; the sequence is GRKT. Arg-60 serves as a coordination point for substrate. Residues 65–68 and 98–103 each bind NADP(+); these read ISRQ and MGGAQI. Thr-117 provides a ligand contact to substrate.

Belongs to the dihydrofolate reductase family.

The enzyme catalyses (6S)-5,6,7,8-tetrahydrofolate + NADP(+) = 7,8-dihydrofolate + NADPH + H(+). Its pathway is cofactor biosynthesis; tetrahydrofolate biosynthesis; 5,6,7,8-tetrahydrofolate from 7,8-dihydrofolate: step 1/1. Its function is as follows. Key enzyme in folate metabolism. Catalyzes an essential reaction for de novo glycine and purine synthesis, and for DNA precursor synthesis. The polypeptide is Dihydrofolate reductase (folA) (Neisseria meningitidis serogroup A / serotype 4A (strain DSM 15465 / Z2491)).